The primary structure comprises 397 residues: Myb family transcription factor PHL4 (397 aa).

The tract at residues 1–27 is disordered; sequence MIPNDDDDANSMKNYPLNDDDANSMKN. The 61-residue stretch at 228-288 folds into the HTH myb-type domain; sequence AAAKGRMRWT…HLQKYRTAKY (61 aa). The H-T-H motif DNA-binding region spans 259–284; sequence PKGVLKHMKVEGLTIFHVKSHLQKYR. The tract at residues 319–339 is coiled coil; it reads TETLRIQMEHQKKLHEQLESL. Residues 332–337 carry the LHEQLE motif; sequence LHEQLE. The disordered stretch occupies residues 359–397; the sequence is KQNMGFGGPEQGEKTSAKTPENGSEESESPRPKRPRNEE. Residues 386 to 397 show a composition bias toward basic and acidic residues; the sequence is ESPRPKRPRNEE. Serine 387 bears the Phosphoserine mark.

It belongs to the MYB-CC family.

The protein resides in the nucleus. Functionally, transcription factor involved in male gametophyte development. This Arabidopsis thaliana (Mouse-ear cress) protein is Myb family transcription factor PHL4.